Reading from the N-terminus, the 437-residue chain is Beta-1,3-galactosyl-O-glycosyl-glycoprotein beta-1,6-N-acetylglucosaminyltransferase 3 (437 aa).

The Cytoplasmic segment spans residues 1-6; that stretch reads MVSWRR. A helical; Signal-anchor for type II membrane protein membrane pass occupies residues 7–27; the sequence is FCWHYHGWTLGCYMLLAIIAL. Residues 28 to 437 lie on the Lumenal side of the membrane; that stretch reads KLSLRLKCDF…RHKAIYGTEL (410 aa). 4 disulfides stabilise this stretch: C70–C227, C161–C381, C182–C209, and C390–C422. Residue N288 is glycosylated (N-linked (GlcNAc...) asparagine).

It belongs to the glycosyltransferase 14 family. In terms of processing, N-glycosylated.

The protein localises to the golgi apparatus membrane. The catalysed reaction is a 3-O-[beta-D-galactosyl-(1-&gt;3)-N-acetyl-alpha-D-galactosaminyl]-L-seryl-[protein] + UDP-N-acetyl-alpha-D-glucosamine = 3-O-{beta-D-galactosyl-(1-&gt;3)-[N-acetyl-beta-D-glucosaminyl-(1-&gt;6)]-N-acetyl-alpha-D-galactosaminyl}-L-seryl-[protein] + UDP + H(+). It catalyses the reaction a 3-O-[beta-D-galactosyl-(1-&gt;3)-N-acetyl-alpha-D-galactosaminyl]-L-threonyl-[protein] + UDP-N-acetyl-alpha-D-glucosamine = a 3-O-{beta-D-galactosyl-(1-&gt;3)-[N-acetyl-beta-D-glucosaminyl-(1-&gt;6)]-N-acetyl-alpha-D-galactosaminyl}-L-threonyl-[protein] + UDP + H(+). It carries out the reaction a beta-D-Gal-(1-&gt;4)-beta-D-GlcNAc-(1-&gt;3)-beta-D-Gal-(1-&gt;4)-beta-D-GlcNAc derivative + UDP-N-acetyl-alpha-D-glucosamine = a beta-D-Gal-(1-&gt;4)-beta-D-GlcNAc-(1-&gt;3)-[beta-D-GlcNAc-(1-&gt;6)]-beta-D-Gal-(1-&gt;4)-N-acetyl-beta-D-glucosaminyl derivative + UDP + H(+). The enzyme catalyses 3-O-[N-acetyl-beta-D-glucosaminyl-(1-&gt;3)-N-acetyl-alpha-D-galactosaminyl]-L-seryl-[protein] + UDP-N-acetyl-alpha-D-glucosamine = 3-O-[N-acetyl-beta-D-glucosaminyl-(1-&gt;3)-[N-acetyl-beta-D-glucosaminyl-(1-&gt;6)]-N-acetyl-alpha-D-galactosaminyl]-L-seryl-[protein] + UDP + H(+). The catalysed reaction is a 3-O-[N-acetyl-beta-D-glucosaminyl-(1-&gt;3)-N-acetyl-alpha-D-galactosaminyl]-L-threonyl-[protein] + UDP-N-acetyl-alpha-D-glucosamine = 3-O-[N-acetyl-beta-D-glucosaminyl-(1-&gt;3)-[N-acetyl-beta-D-glucosaminyl-(1-&gt;6)]-N-acetyl-alpha-D-galactosaminyl]-L-threonyl-[protein] + UDP + H(+). The protein operates within protein modification; protein glycosylation. Its function is as follows. Glycosyltransferase that can synthesize all known mucin beta 6 N-acetylglucosaminides. Mediates core 2 and core 4 O-glycan branching, 2 important steps in mucin-type biosynthesis. Also has I-branching enzyme activity by converting linear into branched poly-N-acetyllactosaminoglycans, leading to introduce the blood group I antigen during embryonic development. The protein is Beta-1,3-galactosyl-O-glycosyl-glycoprotein beta-1,6-N-acetylglucosaminyltransferase 3 (Gcnt3) of Rattus norvegicus (Rat).